The following is a 598-amino-acid chain: Nuclear receptor subfamily 4 group A member 2 (598 aa).

The interval 1 to 22 (MPCVQAQYGSSPQGASPASQSY) is disordered. A compositionally biased stretch (low complexity) spans 8 to 22 (YGSSPQGASPASQSY). A DNA-binding region (nuclear receptor) is located at residues 260–335 (EGLCAVCGDN…VGMVKEVVRT (76 aa)). NR C4-type zinc fingers lie at residues 263–283 (CAVC…CEGC) and 299–318 (CLAN…CQYC). Residues 287 to 314 (FKRTVQKNAKYVCLANKNCPVDKRRRNR) carry the Bipartite nuclear localization signal (NLS1) motif. Positions 337 to 361 (SLKGRRGRLPSKPKSPQEPSPPSPP) are disordered. The short motif at 338–350 (LKGRRGRLPSKPK) is the Nuclear localization signal (NLS1) element. Pro residues predominate over residues 352–361 (PQEPSPPSPP). The 236-residue stretch at 360-595 (PPVSLISALV…AIIDKLFLDT (236 aa)) folds into the NR LBD domain. Positions 443 to 452 (FLELFVLRLA) match the nuclear export sequence (NES1) motif. The nuclear export sequence (NES2) signature appears at 568-577 (QGLQRIFYLK).

It belongs to the nuclear hormone receptor family. NR4 subfamily. In terms of assembly, interacts with SFPQ, NCOR2, SIN3A and HADC1. The interaction with NCOR2 increases in the absence of PITX3. Interacts with PER2.

Its subcellular location is the cytoplasm. It is found in the nucleus. In terms of biological role, transcriptional regulator which is important for the differentiation and maintenance of meso-diencephalic dopaminergic (mdDA) neurons during development. It is crucial for expression of a set of genes such as SLC6A3, SLC18A2, TH and DRD2 which are essential for development of mdDA neurons. The protein is Nuclear receptor subfamily 4 group A member 2 (NR4A2) of Bos taurus (Bovine).